The chain runs to 389 residues: Chalcone synthase 3 (389 aa).

Residue Cys164 is part of the active site.

It belongs to the thiolase-like superfamily. Chalcone/stilbene synthases family.

The enzyme catalyses (E)-4-coumaroyl-CoA + 3 malonyl-CoA + 3 H(+) = 2',4,4',6'-tetrahydroxychalcone + 3 CO2 + 4 CoA. It participates in secondary metabolite biosynthesis; flavonoid biosynthesis. The primary product of this enzyme is 4,2',4',6'-tetrahydroxychalcone (also termed naringenin-chalcone or chalcone) which can under specific conditions spontaneously isomerize into naringenin. The sequence is that of Chalcone synthase 3 (CHS3) from Camellia sinensis (Tea plant).